The following is a 699-amino-acid chain: Triacylglycerol hydrolase DDHD2 (699 aa).

Over residues 1 to 11 (MSSGESHQEQL) the composition is skewed to polar residues. Positions 1–25 (MSSGESHQEQLSQSDPSPSPNSCSS) are disordered. A compositionally biased stretch (low complexity) spans 12 to 25 (SQSDPSPSPNSCSS). Residues 30-112 (DMDASSSYEP…WDELPSEVRR (83 aa)) form the WWE domain. Catalysis depends on serine 351, which acts as the Nucleophile. An SAM domain is found at 383-445 (DRGDASTLEE…KILNHFSARK (63 aa)). A Phosphoserine modification is found at serine 447. Residues 484 to 688 (LNYKPEIFFA…VLLVLKEIYQ (205 aa)) form the DDHD domain. Residues 599-635 (QASETAEETEAEPESSSEKSNEANTEEPPVEVKEEAP) form a disordered region. Positions 603–613 (TAEETEAEPES) are enriched in acidic residues.

This sequence belongs to the PA-PLA1 family. In terms of assembly, forms homooligomers and, to a much smaller extent, heterooligomers with DDHD1.

Its subcellular location is the cytoplasm. It localises to the cytosol. It is found in the endoplasmic reticulum-Golgi intermediate compartment. The protein localises to the golgi apparatus. The protein resides in the cis-Golgi network. It carries out the reaction a triacylglycerol + H2O = a diacylglycerol + a fatty acid + H(+). It catalyses the reaction a diacylglycerol + H2O = a monoacylglycerol + a fatty acid + H(+). The enzyme catalyses a 1,3-diacylglycerol + H2O = a 1-acylglycerol + a fatty acid + H(+). The catalysed reaction is a 1-acylglycerol + H2O = glycerol + a fatty acid + H(+). It carries out the reaction 1,2,3-tri-(9Z-octadecenoyl)-glycerol + H2O = di-(9Z)-octadecenoylglycerol + (9Z)-octadecenoate + H(+). It catalyses the reaction di-(9Z)-octadecenoylglycerol + H2O = (9Z-octadecenoyl)-glycerol + (9Z)-octadecenoate + H(+). The enzyme catalyses 1,3-di-(9Z-octadecenoyl)-glycerol + H2O = 1-(9Z-octadecenoyl)-glycerol + (9Z)-octadecenoate + H(+). The catalysed reaction is trihexadecanoylglycerol + H2O = dihexadecanoylglycerol + hexadecanoate + H(+). It carries out the reaction 1,2-di-(9Z-octadecenoyl)-sn-glycero-3-phosphocholine + H2O = (9Z-octadecenoyl)-sn-glycero-3-phosphocholine + (9Z)-octadecenoate + H(+). It catalyses the reaction 1-(9Z-octadecenoyl)-glycerol + H2O = glycerol + (9Z)-octadecenoate + H(+). The enzyme catalyses 1,2-di-(9Z-octadecenoyl)-sn-glycero-3-phosphate + H2O = 2-(9Z-octadecenoyl)-sn-glycero-3-phosphate + (9Z)-octadecenoate + H(+). The catalysed reaction is 1-hexadecanoyl-2-(9Z-octadecenoyl)-sn-glycero-3-phosphate + H2O = 2-(9Z-octadecenoyl)-sn-glycero-3-phosphate + hexadecanoate + H(+). It carries out the reaction 1-hexadecanoyl-2-(9Z-octadecenoyl)-sn-glycero-3-phosphoethanolamine + H2O = 2-(9Z-octadecenoyl)-sn-glycero-3-phosphoethanolamine + hexadecanoate + H(+). It catalyses the reaction 1-hexadecanoyl-2-(9Z-octadecenoyl)-sn-glycero-3-phospho-L-serine + H2O = 2-(9Z-octadecenoyl)-sn-glycero-3-phospho-L-serine + hexadecanoate + H(+). The enzyme catalyses 1-hexadecanoyl-2-(9Z-octadecenoyl)-sn-glycero-3-phosphocholine + H2O = 2-(9Z-octadecenoyl)-sn-glycero-3-phosphocholine + hexadecanoate + H(+). Its function is as follows. Diacylglycerol (DAG) and triacylglycerol (TAG) lipase that is required for proper lipid homeostasis in the central nervous system. It cooperates with PNPLA2/ATGL in neuronal TAG catabolism and hydrolyzes sn-1,3-DAG downstream of PNPLA2/ATGL. In vitro, also acts as a phospholipase that hydrolyzes preferentially phosphatidic acids, including 1,2-dioleoyl-sn-phosphatidic acid, phosphatidylcholine and phosphatidylethanolamine. Specifically binds to phosphatidylinositol 3-phosphate (PI(3)P), phosphatidylinositol 4-phosphate (PI(4)P), phosphatidylinositol 5-phosphate (PI(5)P) and possibly phosphatidylinositol 4,5-bisphosphate (PI(4,5)P2). May be involved in the maintenance of the endoplasmic reticulum and/or Golgi structures. May regulate the transport between Golgi apparatus and plasma membrane. The sequence is that of Triacylglycerol hydrolase DDHD2 from Mus musculus (Mouse).